Consider the following 243-residue polypeptide: Ribosomal RNA small subunit methyltransferase G (243 aa).

Residues Gly-79, Phe-84, 130-131, and Arg-150 each bind S-adenosyl-L-methionine; that span reads AE. Positions 219–243 are disordered; sequence EKKKQTPNKYPRKPGTPGKDPIGKK.

This sequence belongs to the methyltransferase superfamily. RNA methyltransferase RsmG family.

It localises to the cytoplasm. Functionally, specifically methylates the N7 position of a guanine in 16S rRNA. In Pediococcus pentosaceus (strain ATCC 25745 / CCUG 21536 / LMG 10740 / 183-1w), this protein is Ribosomal RNA small subunit methyltransferase G.